We begin with the raw amino-acid sequence, 1109 residues long: Carbamoyl phosphate synthase large chain (1109 aa).

Residues 1–402 (MPRRTDLTSV…ALQKAMRSID (402 aa)) form a carboxyphosphate synthetic domain region. ATP contacts are provided by arginine 129, arginine 169, glycine 175, glycine 176, glutamate 208, isoleucine 210, glutamate 215, glycine 241, valine 242, histidine 243, glutamine 285, and glutamate 299. Residues 133–328 (KGVVERCGAE…IAKIAARLAV (196 aa)) enclose the ATP-grasp 1 domain. Residues glutamine 285, glutamate 299, and asparagine 301 each coordinate Mg(2+). The Mn(2+) site is built by glutamine 285, glutamate 299, and asparagine 301. Residues 403-548 (KAGSTFHWRG…YHYSSYDAET (146 aa)) are oligomerization domain. The segment at 549–956 (EVQPRDRPAV…AFAKSQAAAY (408 aa)) is carbamoyl phosphate synthetic domain. The region spanning 678 to 876 (GEVLVAAGLP…LAKAASLLMA (199 aa)) is the ATP-grasp 2 domain. Residues arginine 714, arginine 760, leucine 762, glutamate 767, glycine 792, isoleucine 793, histidine 794, serine 795, glutamine 835, and glutamate 847 each coordinate ATP. Glutamine 835, glutamate 847, and asparagine 849 together coordinate Mg(2+). Glutamine 835, glutamate 847, and asparagine 849 together coordinate Mn(2+). The MGS-like domain occupies 957–1102 (GGLPTSGRVF…QEHDAARAAR (146 aa)). The tract at residues 957-1109 (GGLPTSGRVF…AARETEGVHA (153 aa)) is allosteric domain.

The protein belongs to the CarB family. In terms of assembly, composed of two chains; the small (or glutamine) chain promotes the hydrolysis of glutamine to ammonia, which is used by the large (or ammonia) chain to synthesize carbamoyl phosphate. Tetramer of heterodimers (alpha,beta)4. Requires Mg(2+) as cofactor. Mn(2+) serves as cofactor.

It carries out the reaction hydrogencarbonate + L-glutamine + 2 ATP + H2O = carbamoyl phosphate + L-glutamate + 2 ADP + phosphate + 2 H(+). The catalysed reaction is hydrogencarbonate + NH4(+) + 2 ATP = carbamoyl phosphate + 2 ADP + phosphate + 2 H(+). It functions in the pathway amino-acid biosynthesis; L-arginine biosynthesis; carbamoyl phosphate from bicarbonate: step 1/1. The protein operates within pyrimidine metabolism; UMP biosynthesis via de novo pathway; (S)-dihydroorotate from bicarbonate: step 1/3. Its function is as follows. Large subunit of the glutamine-dependent carbamoyl phosphate synthetase (CPSase). CPSase catalyzes the formation of carbamoyl phosphate from the ammonia moiety of glutamine, carbonate, and phosphate donated by ATP, constituting the first step of 2 biosynthetic pathways, one leading to arginine and/or urea and the other to pyrimidine nucleotides. The large subunit (synthetase) binds the substrates ammonia (free or transferred from glutamine from the small subunit), hydrogencarbonate and ATP and carries out an ATP-coupled ligase reaction, activating hydrogencarbonate by forming carboxy phosphate which reacts with ammonia to form carbamoyl phosphate. The sequence is that of Carbamoyl phosphate synthase large chain from Beutenbergia cavernae (strain ATCC BAA-8 / DSM 12333 / CCUG 43141 / JCM 11478 / NBRC 16432 / NCIMB 13614 / HKI 0122).